The sequence spans 304 residues: Acetyl-coenzyme A carboxylase carboxyl transferase subunit beta (304 aa).

The region spanning 23 to 292 is the CoA carboxyltransferase N-terminal domain; sequence VWTKCDSCGQ…PNPDAPREGV (270 aa). Zn(2+) contacts are provided by Cys-27, Cys-30, Cys-46, and Cys-49. Residues 27-49 form a C4-type zinc finger; the sequence is CDSCGQVLYRAELERNLEVCPKC. The disordered stretch occupies residues 283 to 304; it reads PNPDAPREGVVVPPAPDQESEA.

Belongs to the AccD/PCCB family. Acetyl-CoA carboxylase is a heterohexamer composed of biotin carboxyl carrier protein (AccB), biotin carboxylase (AccC) and two subunits each of ACCase subunit alpha (AccA) and ACCase subunit beta (AccD). Zn(2+) serves as cofactor.

Its subcellular location is the cytoplasm. It carries out the reaction N(6)-carboxybiotinyl-L-lysyl-[protein] + acetyl-CoA = N(6)-biotinyl-L-lysyl-[protein] + malonyl-CoA. Its pathway is lipid metabolism; malonyl-CoA biosynthesis; malonyl-CoA from acetyl-CoA: step 1/1. Functionally, component of the acetyl coenzyme A carboxylase (ACC) complex. Biotin carboxylase (BC) catalyzes the carboxylation of biotin on its carrier protein (BCCP) and then the CO(2) group is transferred by the transcarboxylase to acetyl-CoA to form malonyl-CoA. This is Acetyl-coenzyme A carboxylase carboxyl transferase subunit beta from Salmonella agona (strain SL483).